The primary structure comprises 334 residues: Syntaxin-18 (334 aa).

Topologically, residues 1-308 (MAVDITLLFR…EDIREAIKNN (308 aa)) are cytoplasmic. Disordered regions lie at residues 29-50 (GGAD…GDFS) and 166-225 (LSKL…GEDE). 2 stretches are compositionally biased toward basic and acidic residues: residues 33–50 (GSRD…GDFS) and 166–182 (LSKL…DSTS). Positions 183 to 192 (EKAPQNASQD) are enriched in polar residues. The segment covering 193-207 (SEGKPAAEELPEKPL) has biased composition (basic and acidic residues). A t-SNARE coiled-coil homology domain is found at 242–304 (IGEMNSLFDE…KEGNEDIREA (63 aa)). A helical; Anchor for type IV membrane protein membrane pass occupies residues 309–329 (AGFRVWILFFLVMCSFSLLFL). Residues 330 to 334 (DWYDS) are Lumenal-facing.

This sequence belongs to the syntaxin family. Component of a SNARE complex consisting of STX18, USE1L, BNIP1/SEC20L, and SEC22B. RINT1/TIP20L and ZW10 are associated with the complex through interaction with BNIP1/SEC20L. Interacts directly with USE1L and BNIP1/SEC20L.

Its subcellular location is the endoplasmic reticulum membrane. The protein resides in the golgi apparatus membrane. Syntaxin that may be involved in targeting and fusion of Golgi-derived retrograde transport vesicles with the ER. The protein is Syntaxin-18 (Stx18) of Mus musculus (Mouse).